The following is a 159-amino-acid chain: Cytochrome c-type biogenesis protein CcmE (159 aa).

Residues 1–23 (MNNSSLENSASLKVILKQRKKKR) lie on the Cytoplasmic side of the membrane. The helical; Signal-anchor for type II membrane protein transmembrane segment at 24-44 (LLIILLCCLVMAIAASLVVYA) threads the bilayer. Over 45–159 (MRHAVSFFRM…RLKKHYSVEK (115 aa)) the chain is Periplasmic. 2 residues coordinate heme: H138 and Y142.

The protein belongs to the CcmE/CycJ family.

The protein localises to the cell inner membrane. Functionally, heme chaperone required for the biogenesis of c-type cytochromes. Transiently binds heme delivered by CcmC and transfers the heme to apo-cytochromes in a process facilitated by CcmF and CcmH. This is Cytochrome c-type biogenesis protein CcmE from Bartonella tribocorum (strain CIP 105476 / IBS 506).